The sequence spans 691 residues: Histone-lysine N-methyltransferase Set8 (691 aa).

Disordered stretches follow at residues 1 to 22 (MIMVRRRARPAKETGGGSAAAA), 211 to 234 (RSGLRDSHSSSHSSSSSGGASATT), 345 to 381 (PAAGGGAGAAARRRKPATPHRILCPSPIKTLPRGDGG), 422 to 450 (SRRRLNQPKPQAPYQPQQPQPPPGTQPTN), and 484 to 516 (APAKPRAALTKGSKTKTGSKIQPGPLPLAATNG). Low complexity predominate over residues 220–232 (SSHSSSSSGGASA). Pro residues predominate over residues 431–446 (PQAPYQPQQPQPPPGT). Positions 484–503 (APAKPRAALTKGSKTKTGSK) are enriched in low complexity. The 122-residue stretch at 555–676 (EGLQVRNFMG…PGEELTYDYG (122 aa)) folds into the SET domain. Residues 565-567 (KGR), Tyr610, and 637-638 (NH) contribute to the S-adenosyl-L-methionine site.

The protein belongs to the class V-like SAM-binding methyltransferase superfamily. Histone-lysine methyltransferase family. PR/SET subfamily.

It localises to the nucleus. Its subcellular location is the chromosome. It carries out the reaction L-lysyl(20)-[histone H4] + S-adenosyl-L-methionine = N(6)-methyl-L-lysyl(20)-[histone H4] + S-adenosyl-L-homocysteine + H(+). Histone methyltransferase that specifically monomethylates 'Lys-20' of histone H4. H4 'Lys-20' monomethylation is enriched during mitosis and represents a specific tag for epigenetic transcriptional repression. Mainly functions in euchromatin regions, thereby playing a central role in the silencing of euchromatic genes. Required for cell proliferation, possibly by contributing to the maintenance of proper higher-order structure of DNA and chromosome condensation during mitosis. This chain is Histone-lysine N-methyltransferase Set8, found in Drosophila pseudoobscura pseudoobscura (Fruit fly).